The following is a 215-amino-acid chain: Adenylate kinase (215 aa).

Gly-10–Thr-15 serves as a coordination point for ATP. Positions Ser-30 to Val-59 are NMP. Residues Thr-31, Arg-36, Glu-57 to Val-59, Gly-85 to Arg-88, and Gln-92 each bind AMP. Positions Gly-126 to Asp-163 are LID. Arg-127 is a binding site for ATP. Residues Cys-130, Cys-133, Cys-150, and Cys-153 each coordinate Zn(2+). The AMP site is built by Arg-160 and Arg-172. Residue Ala-200 participates in ATP binding.

It belongs to the adenylate kinase family. As to quaternary structure, monomer.

Its subcellular location is the cytoplasm. It carries out the reaction AMP + ATP = 2 ADP. It functions in the pathway purine metabolism; AMP biosynthesis via salvage pathway; AMP from ADP: step 1/1. Catalyzes the reversible transfer of the terminal phosphate group between ATP and AMP. Plays an important role in cellular energy homeostasis and in adenine nucleotide metabolism. This Rhizorhabdus wittichii (strain DSM 6014 / CCUG 31198 / JCM 15750 / NBRC 105917 / EY 4224 / RW1) (Sphingomonas wittichii) protein is Adenylate kinase.